We begin with the raw amino-acid sequence, 390 residues long: Type II methyltransferase M.SacI (390 aa).

The region spanning 5-371 is the SAM-dependent MTase C5-type domain; sequence LPVISLFSGA…RALMEQLGYL (367 aa). Residue cysteine 96 is part of the active site.

Belongs to the class I-like SAM-binding methyltransferase superfamily. C5-methyltransferase family.

It carries out the reaction a 2'-deoxycytidine in DNA + S-adenosyl-L-methionine = a 5-methyl-2'-deoxycytidine in DNA + S-adenosyl-L-homocysteine + H(+). Functionally, a beta methylase recognizes the double-stranded sequence 5'-GAGCTC-3', methylates C-4 on both strands, and protects the DNA from cleavage by the SacI endonuclease. The polypeptide is Type II methyltransferase M.SacI (Streptomyces achromogenes).